A 235-amino-acid polypeptide reads, in one-letter code: LexA repressor (235 aa).

Positions 47-67 form a DNA-binding region, H-T-H motif; the sequence is IREIADAVGLTSTSSVAHQLR. Residues Ser-159 and Lys-196 each act as for autocatalytic cleavage activity in the active site.

It belongs to the peptidase S24 family. As to quaternary structure, homodimer.

The catalysed reaction is Hydrolysis of Ala-|-Gly bond in repressor LexA.. Functionally, represses a number of genes involved in the response to DNA damage (SOS response), including recA and lexA. In the presence of single-stranded DNA, RecA interacts with LexA causing an autocatalytic cleavage which disrupts the DNA-binding part of LexA, leading to derepression of the SOS regulon and eventually DNA repair. The chain is LexA repressor from Mycobacterium leprae (strain Br4923).